The primary structure comprises 328 residues: Tetraacyldisaccharide 4'-kinase (328 aa).

Position 55 to 62 (55 to 62 (TAGGNGKT)) interacts with ATP.

The protein belongs to the LpxK family.

The enzyme catalyses a lipid A disaccharide + ATP = a lipid IVA + ADP + H(+). Its pathway is glycolipid biosynthesis; lipid IV(A) biosynthesis; lipid IV(A) from (3R)-3-hydroxytetradecanoyl-[acyl-carrier-protein] and UDP-N-acetyl-alpha-D-glucosamine: step 6/6. Functionally, transfers the gamma-phosphate of ATP to the 4'-position of a tetraacyldisaccharide 1-phosphate intermediate (termed DS-1-P) to form tetraacyldisaccharide 1,4'-bis-phosphate (lipid IVA). This Escherichia coli O17:K52:H18 (strain UMN026 / ExPEC) protein is Tetraacyldisaccharide 4'-kinase.